The primary structure comprises 353 residues: Peptide chain release factor 1 (353 aa).

Q230 carries the post-translational modification N5-methylglutamine.

The protein belongs to the prokaryotic/mitochondrial release factor family. Methylated by PrmC. Methylation increases the termination efficiency of RF1.

It is found in the cytoplasm. In terms of biological role, peptide chain release factor 1 directs the termination of translation in response to the peptide chain termination codons UAG and UAA. The sequence is that of Peptide chain release factor 1 from Gluconobacter oxydans (strain 621H) (Gluconobacter suboxydans).